The following is a 379-amino-acid chain: Cytochrome b (379 aa).

Transmembrane regions (helical) follow at residues 33 to 53 (FGSL…FLAM), 77 to 98 (WLIR…YLHI), 113 to 133 (WNIG…GYVL), and 178 to 198 (FFAF…IHFF). Residues H83 and H97 each contribute to the heme b site. Heme b is bound by residues H182 and H196. H201 serves as a coordination point for a ubiquinone. A run of 4 helical transmembrane segments spans residues 226 to 246 (IKDI…VLFS), 288 to 308 (LGGV…PMLH), 320 to 340 (FSQC…WIGG), and 347 to 367 (YITI…IVSR).

This sequence belongs to the cytochrome b family. The cytochrome bc1 complex contains 11 subunits: 3 respiratory subunits (MT-CYB, CYC1 and UQCRFS1), 2 core proteins (UQCRC1 and UQCRC2) and 6 low-molecular weight proteins (UQCRH/QCR6, UQCRB/QCR7, UQCRQ/QCR8, UQCR10/QCR9, UQCR11/QCR10 and a cleavage product of UQCRFS1). This cytochrome bc1 complex then forms a dimer. Requires heme b as cofactor.

It is found in the mitochondrion inner membrane. Component of the ubiquinol-cytochrome c reductase complex (complex III or cytochrome b-c1 complex) that is part of the mitochondrial respiratory chain. The b-c1 complex mediates electron transfer from ubiquinol to cytochrome c. Contributes to the generation of a proton gradient across the mitochondrial membrane that is then used for ATP synthesis. This chain is Cytochrome b (MT-CYB), found in Dolichotis patagonum (Patagonian mara).